The following is a 298-amino-acid chain: Protein transport protein SEC13-1 (298 aa).

6 WD repeats span residues 7–46, 51–92, 97–138, 143–196, 203–245, and 253–292; these read AHNDLIHDAVLDYYGKKLATCSSDKTIKIFEVEGESHKLV, GHEG…WSQI, VHTA…TATP, AHAI…QSYL, GHSD…GPWV, and EFPDVLWRASWSLSGNILAISGGDNKVTLWKENLNGKWES.

Belongs to the WD repeat SEC13 family. As to quaternary structure, the COPII coat is composed of at least 5 proteins: the SEC23/24 complex, the SEC13/31 complex, and the protein SAR1. Component of the nuclear pore complex (NPC). NPC constitutes the exclusive means of nucleocytoplasmic transport. NPCs allow the passive diffusion of ions and small molecules and the active, nuclear transport receptor-mediated bidirectional transport of macromolecules such as proteins, RNAs, ribonucleoparticles (RNPs), and ribosomal subunits across the nuclear envelope. Due to its 8-fold rotational symmetry, all subunits are present with 8 copies or multiples thereof.

It localises to the cytoplasmic vesicle. It is found in the COPII-coated vesicle membrane. The protein localises to the endoplasmic reticulum membrane. Its subcellular location is the nucleus. The protein resides in the nuclear pore complex. In terms of biological role, component of the coat protein complex II (COPII) which promotes the formation of transport vesicles from the endoplasmic reticulum (ER). The coat has two main functions, the physical deformation of the endoplasmic reticulum membrane into vesicles and the selection of cargo molecules. It also functions as a component of the nuclear pore complex (NPC). NPC components, collectively referred to as nucleoporins (NUPs), can play the role of both NPC structural components and of docking or interaction partners for transiently associated nuclear transport factors. SEC13 is required for efficient mRNA export from the nucleus to the cytoplasm and for correct nuclear pore biogenesis and distribution. This is Protein transport protein SEC13-1 (SEC131) from Candida glabrata (strain ATCC 2001 / BCRC 20586 / JCM 3761 / NBRC 0622 / NRRL Y-65 / CBS 138) (Yeast).